The primary structure comprises 367 residues: Phosphoribosylaminoimidazole-succinocarboxamide synthase (367 aa).

The protein belongs to the SAICAR synthetase family.

It catalyses the reaction 5-amino-1-(5-phospho-D-ribosyl)imidazole-4-carboxylate + L-aspartate + ATP = (2S)-2-[5-amino-1-(5-phospho-beta-D-ribosyl)imidazole-4-carboxamido]succinate + ADP + phosphate + 2 H(+). It functions in the pathway purine metabolism; IMP biosynthesis via de novo pathway; 5-amino-1-(5-phospho-D-ribosyl)imidazole-4-carboxamide from 5-amino-1-(5-phospho-D-ribosyl)imidazole-4-carboxylate: step 1/2. This Shewanella putrefaciens (strain CN-32 / ATCC BAA-453) protein is Phosphoribosylaminoimidazole-succinocarboxamide synthase.